The chain runs to 376 residues: Succinyl-diaminopimelate desuccinylase (376 aa).

Residue histidine 67 coordinates Zn(2+). Aspartate 69 is an active-site residue. Aspartate 100 provides a ligand contact to Zn(2+). The active-site Proton acceptor is the glutamate 134. Positions 135, 163, and 349 each coordinate Zn(2+).

This sequence belongs to the peptidase M20A family. DapE subfamily. As to quaternary structure, homodimer. Zn(2+) is required as a cofactor. Co(2+) serves as cofactor.

It catalyses the reaction N-succinyl-(2S,6S)-2,6-diaminopimelate + H2O = (2S,6S)-2,6-diaminopimelate + succinate. The protein operates within amino-acid biosynthesis; L-lysine biosynthesis via DAP pathway; LL-2,6-diaminopimelate from (S)-tetrahydrodipicolinate (succinylase route): step 3/3. Its function is as follows. Catalyzes the hydrolysis of N-succinyl-L,L-diaminopimelic acid (SDAP), forming succinate and LL-2,6-diaminopimelate (DAP), an intermediate involved in the bacterial biosynthesis of lysine and meso-diaminopimelic acid, an essential component of bacterial cell walls. The polypeptide is Succinyl-diaminopimelate desuccinylase (Shewanella sediminis (strain HAW-EB3)).